Consider the following 812-residue polypeptide: 5-methyltetrahydropteroyltriglutamate--homocysteine methyltransferase 3, chloroplastic (812 aa).

Residues 1–33 (MGQLALQRLQPLASLPRRPPSLPPPSSATPSLP) constitute a chloroplast transit peptide. The interval 13–33 (ASLPRRPPSLPPPSSATPSLP) is disordered. The segment covering 17–27 (RRPPSLPPPSS) has biased composition (pro residues). 2 residues coordinate 5-methyltetrahydropteroyltri-L-glutamate: lysine 66 and asparagine 164. The disordered stretch occupies residues 430–456 (MRQASRRSSPRVTNAAVQQDVDAVKKS). L-homocysteine-binding positions include 485 to 487 (IGS) and glutamate 538. L-methionine-binding positions include 485-487 (IGS) and glutamate 538. 5-methyltetrahydropteroyltri-L-glutamate contacts are provided by residues aspartate 543, tyrosine 566, 569–570 (RC), and tryptophan 615. An L-homocysteine-binding site is contributed by aspartate 653. Aspartate 653 serves as a coordination point for L-methionine. Residues histidine 695, cysteine 697, histidine 706, aspartate 710, and glutamate 719 each contribute to the Zn(2+) site. Histidine 749 serves as the catalytic Proton donor. Cysteine 781 is a Zn(2+) binding site.

Belongs to the vitamin-B12 independent methionine synthase family. It depends on Zn(2+) as a cofactor. As to expression, expressed in seeds.

It is found in the plastid. The protein resides in the chloroplast. It carries out the reaction 5-methyltetrahydropteroyltri-L-glutamate + L-homocysteine = tetrahydropteroyltri-L-glutamate + L-methionine. The protein operates within amino-acid biosynthesis; L-methionine biosynthesis via de novo pathway; L-methionine from L-homocysteine (MetE route): step 1/1. Functionally, catalyzes the transfer of a methyl group from 5-methyltetrahydrofolate to homocysteine resulting in methionine formation. The chain is 5-methyltetrahydropteroyltriglutamate--homocysteine methyltransferase 3, chloroplastic (MS3) from Arabidopsis thaliana (Mouse-ear cress).